The primary structure comprises 330 residues: MAGWAGAELSVLNPLRALWLLLAAAFLLALLLQLAPARLLPSCALFQDLIRYGKTKQSGSRRPAVCRAFDVPKRYFSHFYVVSVLWNGSLLWFLSQSLFLGAPFPSWLWALLRTLGVTQFQALGMESKASRIQGKKLALSTFLVLVFLWVHSLRRLFECFYVSVFSNTAIHVVQYCFGLVYYVLVGLTVLSQVPMNDKNVYALGKNLLLQARWFHILGMMMFFWSSAHQYKCHVILSNLRRNKKGVVIHCQHRIPFGDWFEYVSSANYLAELMIYISMAVTFGLHNVTWWLVVTYVFFSQALSAFFNHRFYKSTFVSYPKHRKAFLPFLF.

At 1-16 (MAGWAGAELSVLNPLR) the chain is on the cytoplasmic side. The chain crosses the membrane as a helical span at residues 17–37 (ALWLLLAAAFLLALLLQLAPA). The Lumenal segment spans residues 38 to 89 (RLLPSCALFQDLIRYGKTKQSGSRRPAVCRAFDVPKRYFSHFYVVSVLWNGS). Residues 90–110 (LLWFLSQSLFLGAPFPSWLWA) form a helical membrane-spanning segment. Topologically, residues 111 to 136 (LLRTLGVTQFQALGMESKASRIQGKK) are cytoplasmic. Residues 137-157 (LALSTFLVLVFLWVHSLRRLF) form a helical membrane-spanning segment. The Lumenal segment spans residues 158 to 169 (ECFYVSVFSNTA). The helical transmembrane segment at 170-190 (IHVVQYCFGLVYYVLVGLTVL) threads the bilayer. Residues 191–206 (SQVPMNDKNVYALGKN) are Cytoplasmic-facing. The helical transmembrane segment at 207-227 (LLLQARWFHILGMMMFFWSSA) threads the bilayer. The Lumenal segment spans residues 228-277 (HQYKCHVILSNLRRNKKGVVIHCQHRIPFGDWFEYVSSANYLAELMIYIS). The chain crosses the membrane as a helical span at residues 278 to 298 (MAVTFGLHNVTWWLVVTYVFF). Residues 299–330 (SQALSAFFNHRFYKSTFVSYPKHRKAFLPFLF) are Cytoplasmic-facing.

Belongs to the steroid 5-alpha reductase family. Polyprenal reductase subfamily. As to expression, expressed in the 2 tissues tested i.e. testis and liver.

The protein resides in the endoplasmic reticulum membrane. It catalyses the reaction a di-trans,poly-cis-dolichal + NADP(+) = a di-trans,poly-cis-polyprenal + NADPH + H(+). The catalysed reaction is a 3-oxo-5alpha-steroid + NADP(+) = a 3-oxo-Delta(4)-steroid + NADPH + H(+). It carries out the reaction androst-4-ene-3,17-dione + NADPH + H(+) = 5alpha-androstan-3,17-dione + NADP(+). The enzyme catalyses 17beta-hydroxy-5alpha-androstan-3-one + NADP(+) = testosterone + NADPH + H(+). Its pathway is protein modification; protein glycosylation. Its function is as follows. Plays a key role in early steps of protein N-linked glycosylation by being involved in the conversion of polyprenol into dolichol. Acts as a polyprenal reductase that mediates the reduction of polyprenal into dolichal in a NADP-dependent mechanism. Dolichols are required for the synthesis of dolichol-linked monosaccharides and the oligosaccharide precursor used for N-glycosylation. Also able to convert testosterone (T) into 5-alpha-dihydrotestosterone (DHT). The chain is Polyprenal reductase from Rattus norvegicus (Rat).